We begin with the raw amino-acid sequence, 900 residues long: Aldos-2-ulose dehydratase (900 aa).

The tract at residues 1–433 is dehydratase domain; sequence MYSKVFLKPH…NPSINVFLST (433 aa). Y35 contributes to the ascopyrone M binding site. Mg(2+) contacts are provided by D101, T103, N105, F107, and D109. The ascopyrone M site is built by Y116, M120, H155, H215, H295, and H337. H155 acts as the Proton acceptor in catalysis. Positions 215, 295, 337, 343, 345, 347, 349, and 351 each coordinate Zn(2+). Ascopyrone M is bound by residues Y414, Y419, and A627. The interval 434 to 739 is isomerase domain; that stretch reads GILAERLDEE…EFPGFETFST (306 aa). Positions 627 and 630 each coordinate 1,5-anhydro-D-fructose. Zn(2+) is bound by residues H630, H632, and E639. 2 residues coordinate ascopyrone M: E639 and H641. H641 lines the 1,5-anhydro-D-fructose pocket. H709 lines the Zn(2+) pocket. Ascopyrone M is bound at residue W726. W726 contributes to the 1,5-anhydro-D-fructose binding site.

As to quaternary structure, homodimer. Zn(2+) is required as a cofactor.

The enzyme catalyses 1,5-anhydro-D-fructose = microthecin + H2O. The catalysed reaction is 1,5-anhydro-D-fructose = ascopyrone M + H2O. It carries out the reaction ascopyrone M = microthecin. It catalyses the reaction 2-dehydro-D-glucose = cortalcerone + H2O. It participates in carbohydrate metabolism; 1,5-anhydro-D-fructose degradation. In terms of biological role, a bifunctional enzyme which catalyzes the dehydration of anhydrofructose into ascopyrone M, and the isomerization of ascopyrone M into microthecin. To a lesser extent, can also act on 2-dehydro-D-glucopyranose (D-glucosone), leading to the antibiotic cortalcerone. This Phanerodontia chrysosporium (White-rot fungus) protein is Aldos-2-ulose dehydratase.